Reading from the N-terminus, the 500-residue chain is Probable cytosol aminopeptidase (500 aa).

Positions 264 and 269 each coordinate Mn(2+). K276 is a catalytic residue. Mn(2+) is bound by residues D287, D346, and E348. R350 is a catalytic residue.

Belongs to the peptidase M17 family. It depends on Mn(2+) as a cofactor.

It is found in the cytoplasm. The enzyme catalyses Release of an N-terminal amino acid, Xaa-|-Yaa-, in which Xaa is preferably Leu, but may be other amino acids including Pro although not Arg or Lys, and Yaa may be Pro. Amino acid amides and methyl esters are also readily hydrolyzed, but rates on arylamides are exceedingly low.. It carries out the reaction Release of an N-terminal amino acid, preferentially leucine, but not glutamic or aspartic acids.. Presumably involved in the processing and regular turnover of intracellular proteins. Catalyzes the removal of unsubstituted N-terminal amino acids from various peptides. In Nitrobacter hamburgensis (strain DSM 10229 / NCIMB 13809 / X14), this protein is Probable cytosol aminopeptidase.